We begin with the raw amino-acid sequence, 112 residues long: PTS system lactose-specific EIIA component (112 aa).

The PTS EIIA type-3 domain maps to 6 to 104 (EEISMVGFAL…TRYMIRMFKR (99 aa)). The active-site Tele-phosphohistidine intermediate is His-80. Phosphohistidine; by HPr is present on His-80. Asp-83 provides a ligand contact to Mg(2+).

As to quaternary structure, homotrimer. It depends on Mg(2+) as a cofactor.

It is found in the cytoplasm. In terms of biological role, the phosphoenolpyruvate-dependent sugar phosphotransferase system (sugar PTS), a major carbohydrate active transport system, catalyzes the phosphorylation of incoming sugar substrates concomitantly with their translocation across the cell membrane. The enzyme II LacEF PTS system is involved in lactose transport. This chain is PTS system lactose-specific EIIA component, found in Lacticaseibacillus casei (Lactobacillus casei).